Here is a 347-residue protein sequence, read N- to C-terminus: Neutral protease 2 homolog MGG_10927 (347 aa).

The first 19 residues, 1–19 (MKYSVGITALLATLAQGAA), serve as a signal peptide directing secretion. A propeptide spanning residues 20-176 (VMSKRDIPLD…RSYLAKRTMV (157 aa)) is cleaved from the precursor. 2 disulfides stabilise this stretch: C180–C250 and C257–C275. H299 provides a ligand contact to Zn(2+). Residue E300 is part of the active site. A Zn(2+)-binding site is contributed by H303.

It belongs to the peptidase M35 family. It depends on Zn(2+) as a cofactor.

The protein resides in the secreted. It carries out the reaction Preferential cleavage of bonds with hydrophobic residues in P1'. Also 3-Asn-|-Gln-4 and 8-Gly-|-Ser-9 bonds in insulin B chain.. Secreted metalloproteinase that allows assimilation of proteinaceous substrates. Shows high activities on basic nuclear substrates such as histone and protamine. This chain is Neutral protease 2 homolog MGG_10927, found in Pyricularia oryzae (strain 70-15 / ATCC MYA-4617 / FGSC 8958) (Rice blast fungus).